A 468-amino-acid polypeptide reads, in one-letter code: 3-isopropylmalate dehydratase large subunit (468 aa).

3 residues coordinate [4Fe-4S] cluster: Cys-349, Cys-409, and Cys-412.

The protein belongs to the aconitase/IPM isomerase family. LeuC type 1 subfamily. Heterodimer of LeuC and LeuD. It depends on [4Fe-4S] cluster as a cofactor.

It carries out the reaction (2R,3S)-3-isopropylmalate = (2S)-2-isopropylmalate. It participates in amino-acid biosynthesis; L-leucine biosynthesis; L-leucine from 3-methyl-2-oxobutanoate: step 2/4. In terms of biological role, catalyzes the isomerization between 2-isopropylmalate and 3-isopropylmalate, via the formation of 2-isopropylmaleate. This chain is 3-isopropylmalate dehydratase large subunit, found in Nitrobacter winogradskyi (strain ATCC 25391 / DSM 10237 / CIP 104748 / NCIMB 11846 / Nb-255).